Here is a 175-residue protein sequence, read N- to C-terminus: Mitochondrial inner membrane protease subunit 2 (175 aa).

Residues F19 to A37 traverse the membrane as a helical segment. Residues S43 and K91 contribute to the active site.

The protein belongs to the peptidase S26 family. IMP2 subfamily. In terms of assembly, heterodimer of 2 subunits, IMMPL1 and IMMPL2.

The protein resides in the mitochondrion inner membrane. Its function is as follows. Catalyzes the removal of transit peptides required for the targeting of proteins from the mitochondrial matrix, across the inner membrane, into the inter-membrane space. Known to process the nuclear encoded protein DIABLO. The chain is Mitochondrial inner membrane protease subunit 2 (Immp2l) from Mus musculus (Mouse).